Here is a 203-residue protein sequence, read N- to C-terminus: Holliday junction branch migration complex subunit RuvA (203 aa).

Positions 1–64 (MIGRLRGTLA…EDAQLLYGFI (64 aa)) are domain I. The segment at 65–143 (GKRDRDFFRE…AWEVVPSMFA (79 aa)) is domain II. The tract at residues 144–154 (LVPNQPDMPAG) is flexible linker. Positions 155-203 (QVASAESDAVSALISLGYKPQEASKAVSAIKDKNLSSEDMIRRALKGMI) are domain III.

This sequence belongs to the RuvA family. As to quaternary structure, homotetramer. Forms an RuvA(8)-RuvB(12)-Holliday junction (HJ) complex. HJ DNA is sandwiched between 2 RuvA tetramers; dsDNA enters through RuvA and exits via RuvB. An RuvB hexamer assembles on each DNA strand where it exits the tetramer. Each RuvB hexamer is contacted by two RuvA subunits (via domain III) on 2 adjacent RuvB subunits; this complex drives branch migration. In the full resolvosome a probable DNA-RuvA(4)-RuvB(12)-RuvC(2) complex forms which resolves the HJ.

The protein localises to the cytoplasm. Its function is as follows. The RuvA-RuvB-RuvC complex processes Holliday junction (HJ) DNA during genetic recombination and DNA repair, while the RuvA-RuvB complex plays an important role in the rescue of blocked DNA replication forks via replication fork reversal (RFR). RuvA specifically binds to HJ cruciform DNA, conferring on it an open structure. The RuvB hexamer acts as an ATP-dependent pump, pulling dsDNA into and through the RuvAB complex. HJ branch migration allows RuvC to scan DNA until it finds its consensus sequence, where it cleaves and resolves the cruciform DNA. The chain is Holliday junction branch migration complex subunit RuvA from Pseudomonas fluorescens (strain SBW25).